We begin with the raw amino-acid sequence, 538 residues long: Chaperonin GroEL (538 aa).

Residues 29 to 32 (TLGP), 86 to 90 (DGTTT), G413, 479 to 481 (DAL), and D495 contribute to the ATP site.

This sequence belongs to the chaperonin (HSP60) family. Forms a cylinder of 14 subunits composed of two heptameric rings stacked back-to-back. Interacts with the co-chaperonin GroES.

Its subcellular location is the cytoplasm. It catalyses the reaction ATP + H2O + a folded polypeptide = ADP + phosphate + an unfolded polypeptide.. Functionally, together with its co-chaperonin GroES, plays an essential role in assisting protein folding. The GroEL-GroES system forms a nano-cage that allows encapsulation of the non-native substrate proteins and provides a physical environment optimized to promote and accelerate protein folding. This chain is Chaperonin GroEL, found in Thermotoga petrophila (strain ATCC BAA-488 / DSM 13995 / JCM 10881 / RKU-1).